A 349-amino-acid polypeptide reads, in one-letter code: tRNA pseudouridine synthase D (349 aa).

A substrate-binding site is contributed by Phe-26. Catalysis depends on Asp-79, which acts as the Nucleophile. Asn-128 contacts substrate. Positions Gly-154–Leu-302 constitute a TRUD domain. Substrate is bound at residue Phe-328.

Belongs to the pseudouridine synthase TruD family.

The enzyme catalyses uridine(13) in tRNA = pseudouridine(13) in tRNA. Responsible for synthesis of pseudouridine from uracil-13 in transfer RNAs. The sequence is that of tRNA pseudouridine synthase D from Yersinia pseudotuberculosis serotype IB (strain PB1/+).